We begin with the raw amino-acid sequence, 300 residues long: Porphobilinogen deaminase (300 aa).

Cys-239 is modified (S-(dipyrrolylmethanemethyl)cysteine).

This sequence belongs to the HMBS family. In terms of assembly, monomer. Requires dipyrromethane as cofactor.

It carries out the reaction 4 porphobilinogen + H2O = hydroxymethylbilane + 4 NH4(+). The protein operates within porphyrin-containing compound metabolism; protoporphyrin-IX biosynthesis; coproporphyrinogen-III from 5-aminolevulinate: step 2/4. Tetrapolymerization of the monopyrrole PBG into the hydroxymethylbilane pre-uroporphyrinogen in several discrete steps. The protein is Porphobilinogen deaminase of Francisella tularensis subsp. holarctica (strain FTNF002-00 / FTA).